Reading from the N-terminus, the 259-residue chain is MEFETIETKKEGNLFWITLNRPDKLNALNAKLLEELDRAVSQAESDPEIRVIIITGKGKAFCAGADITQFNQLTPAEAWKFSKKGREIMDKIEALSKPTIAMINGYALGGGLELALACDIRIAAEEAQLGLPEINLGIYPGYGGTQRLTRVIGKGRALEMMMTGDRIPGKDAEKYGLVNRVVPLANLEQETRKLAEKIAKKSPISLALIKEVVNRGLDSPLLSGLALESVGWGVVFSTEDKKEGVSAFLEKREPTFKGK.

The active-site Nucleophile is Glu113. The active-site Proton acceptor is Glu133.

This sequence belongs to the enoyl-CoA hydratase/isomerase family. In terms of assembly, monomer.

It carries out the reaction 3-hydroxypropanoyl-CoA = acryloyl-CoA + H2O. In terms of biological role, plays a role in autotrophic carbon fixation via the 3-hydroxypropionate/4-hydroxybutyrate cycle. Catalyzes the reversible dehydration of 3-hydroxypropionyl-CoA to form acryloyl-CoA, and the reversible dehydration of (S)-3-hydroxybutyryl-CoA to form crotonyl-CoA. Inactive towards (R)-3-hydroxybutyryl-CoA. This is 3-hydroxypropionyl-coenzyme A dehydratase from Metallosphaera sedula (strain ATCC 51363 / DSM 5348 / JCM 9185 / NBRC 15509 / TH2).